Consider the following 144-residue polypeptide: Large ribosomal subunit protein uL15 (144 aa).

The span at 1 to 13 shows a compositional bias: basic and acidic residues; the sequence is MKLNELKPAEGSR. Positions 1–47 are disordered; sequence MKLNELKPAEGSRKVRNRVGRGDSSGNGKTAGRGQKGQKARSKTRLG. Gly residues predominate over residues 23-35; that stretch reads DSSGNGKTAGRGQ.

Belongs to the universal ribosomal protein uL15 family. In terms of assembly, part of the 50S ribosomal subunit.

Its function is as follows. Binds to the 23S rRNA. In Levilactobacillus brevis (strain ATCC 367 / BCRC 12310 / CIP 105137 / JCM 1170 / LMG 11437 / NCIMB 947 / NCTC 947) (Lactobacillus brevis), this protein is Large ribosomal subunit protein uL15.